A 419-amino-acid chain; its full sequence is Putative zinc metalloprotease M6_Spy1682 (419 aa).

Histidine 18 serves as a coordination point for Zn(2+). Residue glutamate 19 is part of the active site. Histidine 22 serves as a coordination point for Zn(2+). The next 4 membrane-spanning stretches (helical) occupy residues 169–191 (LITN…ILLV), 301–323 (LAWS…FSLN), 343–365 (LESV…LIPI), and 392–411 (AYIT…AVTW). The 100-residue stretch at 175 to 274 (GPMNNFILGI…LKTVAVKPQK (100 aa)) folds into the PDZ domain.

It belongs to the peptidase M50B family. Requires Zn(2+) as cofactor.

It is found in the cell membrane. The sequence is that of Putative zinc metalloprotease M6_Spy1682 from Streptococcus pyogenes serotype M6 (strain ATCC BAA-946 / MGAS10394).